Consider the following 754-residue polypeptide: MVVGTKKYSNLDFVPTISDSEDDVPILDSSDDEKVEAKKTTKKRKGKNNKKKVSEGDNLDEDVHEDLDAGFKFDLDADDTTSNFQGWNFLAEGESNKDDAEAFVKKDVDLDKIIRRKGGLVKMAHIDSKQEEETEKEKVEKENDSDDEELAMDGFGMGAPMNNGDENQSEEEEEEEEEEEEEEEEEEEEQEEMTLEKGGKDDEIDEEDDSEEAKADFYAPETEGDEAKKQMYENFNSLSLSRPVLKGLASLGYVKPSPIQSATIPIALLGKDIIAGAVTGSGKTAAFMIPIIERLLYKPAKIASTRVIVLLPTRELAIQVADVGKQIARFVSGITFGLAVGGLNLRQQEQMLKSRPDIVIATPGRFIDHIRNSASFNVDSVEILVMDEADRMLEEGFQDELNEIMGLLPSNRQNLLFSATMNSKIKSLVSLSLKKPVRIMIDPPKKAATKLTQEFVRIRKRDHLKPALLFNLIRKLDPTGQKRIVVFVARKETAHRLRIIMGLLGMSVGELHGSLTQEQRLDSVNKFKNLEVPVLICTDLASRGLDIPKIEVVINYDMPKSYEIYLHRVGRTARAGREGRSVTFVGESSQDRSIVRAAIKSVEENKSLTQGKALGRNVDWVQIEETNKLVESMNDTIEDILVEEKEEKEILRAEMQLRKGENMLKHKKEIQARPRRTWFQSESDKKNSKVLGALSRNKKVTNSKKRKREEAKADGNGARSYRKTKTDRIADQERTFKKQKSTNSNKKKGFKSRR.

Disordered regions lie at residues 1-61 (MVVG…NLDE) and 119-227 (GLVK…GDEA). Acidic residues predominate over residues 19 to 34 (DSEDDVPILDSSDDEK). Basic residues predominate over residues 40–51 (TTKKRKGKNNKK). Basic and acidic residues predominate over residues 124-142 (AHIDSKQEEETEKEKVEKE). 2 stretches are compositionally biased toward acidic residues: residues 167 to 193 (NQSE…QEEM) and 202 to 211 (DEIDEEDDSE). Ser210 bears the Phosphoserine mark. The Q motif motif lies at 233–261 (ENFNSLSLSRPVLKGLASLGYVKPSPIQS). One can recognise a Helicase ATP-binding domain in the interval 264 to 439 (IPIALLGKDI…SLSLKKPVRI (176 aa)). 277 to 284 (AVTGSGKT) contributes to the ATP binding site. Residues 387 to 390 (DEAD) carry the DEAD box motif. The Helicase C-terminal domain occupies 450 to 641 (KLTQEFVRIR…SMNDTIEDIL (192 aa)). Residues 623 to 669 (IEETNKLVESMNDTIEDILVEEKEEKEILRAEMQLRKGENMLKHKKE) adopt a coiled-coil conformation. The interval 675 to 754 (RRTWFQSESD…NKKKGFKSRR (80 aa)) is disordered. Residues 696–707 (RNKKVTNSKKRK) are compositionally biased toward basic residues. The span at 724–736 (TKTDRIADQERTF) shows a compositional bias: basic and acidic residues. The segment covering 737–754 (KKQKSTNSNKKKGFKSRR) has biased composition (basic residues).

The protein belongs to the DEAD box helicase family. DDX27/DRS1 subfamily. As to quaternary structure, interacts with RRP1 and associates with pre-ribosomal particles.

It localises to the nucleus. The protein resides in the nucleolus. It catalyses the reaction ATP + H2O = ADP + phosphate + H(+). In terms of biological role, ATP-binding RNA helicase involved in ribosome assembly. The protein is ATP-dependent RNA helicase DRS1 (DRS1) of Saccharomyces cerevisiae (strain YJM789) (Baker's yeast).